The following is a 301-amino-acid chain: Diaminopimelate epimerase (301 aa).

The substrate site is built by Asn15, Gln47, and Asn67. The active-site Proton donor is the Cys76. Substrate is bound by residues 77 to 78 (GN), Asn163, Asn197, and 215 to 216 (ER). Cys224 serves as the catalytic Proton acceptor. 225–226 (GS) contributes to the substrate binding site.

Belongs to the diaminopimelate epimerase family. In terms of assembly, homodimer.

Its subcellular location is the cytoplasm. It catalyses the reaction (2S,6S)-2,6-diaminopimelate = meso-2,6-diaminopimelate. The protein operates within amino-acid biosynthesis; L-lysine biosynthesis via DAP pathway; DL-2,6-diaminopimelate from LL-2,6-diaminopimelate: step 1/1. In terms of biological role, catalyzes the stereoinversion of LL-2,6-diaminopimelate (L,L-DAP) to meso-diaminopimelate (meso-DAP), a precursor of L-lysine and an essential component of the bacterial peptidoglycan. The chain is Diaminopimelate epimerase from Rhizobium meliloti (strain 1021) (Ensifer meliloti).